Reading from the N-terminus, the 166-residue chain is Putative peptidyl-prolyl cis-trans isomerase dodo (166 aa).

A WW domain is found at 5-39 (EQLPDGWEKRTSRSTGMSYYLNMYTKESQWDQPTE). Positions 32-53 (SQWDQPTEPAKKAGGGSAGGGD) are disordered. Residues 44-53 (AGGGSAGGGD) are compositionally biased toward gly residues. The PpiC domain maps to 55–166 (PDEVHCLHLL…SGLHIILRKA (112 aa)).

The catalysed reaction is [protein]-peptidylproline (omega=180) = [protein]-peptidylproline (omega=0). The chain is Putative peptidyl-prolyl cis-trans isomerase dodo (dod) from Drosophila melanogaster (Fruit fly).